A 921-amino-acid polypeptide reads, in one-letter code: Sodium/calcium exchanger 2 (921 aa).

A signal peptide spans 1–20; sequence MAPLALVGVTLLLAAPPCSG. The Extracellular portion of the chain corresponds to 21-68; sequence AATPTPSLPPPPANDSDTSTGGCQGSYRCQPGVLLPVWEPDDPSLGDK. The segment at 22–42 is disordered; it reads ATPTPSLPPPPANDSDTSTGG. N-linked (GlcNAc...) asparagine glycosylation is present at asparagine 34. A helical transmembrane segment spans residues 69–90; sequence AARAVVYFVAMVYMFLGVSIIA. Over 91–130 the chain is Cytoplasmic; sequence DRFMAAIEVITSKEKEITITKANGETSVGTVRIWNETVSN. A helical membrane pass occupies residues 131 to 152; it reads LTLMALGSSAPEILLSVIEVCG. The Alpha-1 repeat unit spans residues 135–175; that stretch reads ALGSSAPEILLSVIEVCGHNFQAGELGPGTIVGSAAFNMFV. The Extracellular portion of the chain corresponds to 153 to 164; sequence HNFQAGELGPGT. A helical membrane pass occupies residues 165–185; the sequence is IVGSAAFNMFVVIAVCIYVIP. The Cytoplasmic portion of the chain corresponds to 186–196; it reads AGESRKIKHLR. Residues 197-219 traverse the membrane as a helical segment; sequence VFFVTASWSIFAYVWLYLILAVF. Residues 220-222 lie on the Extracellular side of the membrane; that stretch reads SPG. Residues 223–246 traverse the membrane as a helical segment; sequence VVQVWEALLTLVFFPVCVVFAWMA. The Cytoplasmic portion of the chain corresponds to 247-720; sequence DKRLLFYKYV…DGSREERLPS (474 aa). The putative calmodulin-binding region stretch occupies residues 248-267; that stretch reads KRLLFYKYVYKRYRTDPRSG. Calx-beta domains lie at 384–483 and 512–612; these read GAGE…VRLL and ATVT…IELG. Ca(2+) is bound by residues glutamate 407, aspartate 443, aspartate 468, aspartate 469, isoleucine 471, glutamate 473, glutamate 476, aspartate 518, aspartate 519, aspartate 520, glutamate 536, aspartate 598, glutamate 599, and glutamate 600. Phosphoserine is present on serine 622. Glutamate 665 provides a ligand contact to Ca(2+). Residues 721-740 form a helical membrane-spanning segment; it reads CFDYVMHFLTVFWKVLFACV. The Extracellular portion of the chain corresponds to 741–747; that stretch reads PPTEYCH. Residues 748–770 form a helical membrane-spanning segment; sequence GWACFGVSILVIGLLTALIGDLA. Topologically, residues 771–772 are cytoplasmic; the sequence is SH. Residues 773–791 traverse the membrane as a helical segment; the sequence is FGCTVGLKDSVNAVVFVAL. An Alpha-2 repeat occupies 790–826; that stretch reads ALGTSIPDTFASKVAALQDQCADASIGNVTGSNAVNV. Over 792-822 the chain is Extracellular; that stretch reads GTSIPDTFASKVAALQDQCADASIGNVTGSN. N-linked (GlcNAc...) asparagine glycosylation occurs at asparagine 817. The helical transmembrane segment at 823–843 threads the bilayer; the sequence is AVNVFLGLGVAWSVAAVYWAV. Residues 844-854 lie on the Cytoplasmic side of the membrane; sequence QGRPFEVRTGT. Residues 855–875 traverse the membrane as a helical segment; sequence LAFSVTLFTVFAFVGIAVLLY. Residues 876 to 892 lie on the Extracellular side of the membrane; it reads RRRPHIGGELGGPRGPK. Residues 893–909 form a helical membrane-spanning segment; that stretch reads LATTALFLGLWLLYILF. The Cytoplasmic portion of the chain corresponds to 910–921; it reads ASLEAYCHIRGF.

This sequence belongs to the Ca(2+):cation antiporter (CaCA) (TC 2.A.19) family. SLC8 subfamily.

It localises to the cell membrane. It is found in the basolateral cell membrane. Its subcellular location is the perikaryon. The protein resides in the cell projection. The protein localises to the dendrite. It localises to the dendritic spine. The enzyme catalyses Ca(2+)(in) + 3 Na(+)(out) = Ca(2+)(out) + 3 Na(+)(in). Calcium transport is down-regulated by Na(+) and stimulated by Ca(2+). Mediates the electrogenic exchange of Ca(2+) against Na(+) ions across the cell membrane, and thereby contributes to the regulation of cytoplasmic Ca(2+) levels and Ca(2+)-dependent cellular processes. Contributes to cellular Ca(2+) homeostasis in excitable cells. Contributes to the rapid decrease of cytoplasmic Ca(2+) levels back to baseline after neuronal activation, and thereby contributes to modulate synaptic plasticity, learning and memory. Plays a role in regulating urinary Ca(2+) and Na(+) excretion. The chain is Sodium/calcium exchanger 2 (SLC8A2) from Homo sapiens (Human).